The sequence spans 367 residues: uncharacterized protein (367 aa).

This is an uncharacterized protein from Arabidopsis thaliana (Mouse-ear cress).